The primary structure comprises 160 residues: Eukaryotic translation initiation factor 5A-3 (160 aa).

The span at 1–12 (MSDEEHHFESKA) shows a compositional bias: basic and acidic residues. The disordered stretch occupies residues 1-21 (MSDEEHHFESKADAGASKTYP). Hypusine is present on Lys-52.

It belongs to the eIF-5A family. Post-translationally, lys-52 undergoes hypusination, a unique post-translational modification that consists in the addition of a butylamino group from spermidine to lysine side chain, leading to the formation of the unusual amino acid hypusine. eIF-5As are the only known proteins to undergo this modification, which is essential for their function.

In terms of biological role, translation factor that promotes translation elongation and termination, particularly upon ribosome stalling at specific amino acid sequence contexts. Binds between the exit (E) and peptidyl (P) site of the ribosome and promotes rescue of stalled ribosome: specifically required for efficient translation of polyproline-containing peptides as well as other motifs that stall the ribosome. Acts as a ribosome quality control (RQC) cofactor by joining the RQC complex to facilitate peptidyl transfer during CAT tailing step. This Solanum tuberosum (Potato) protein is Eukaryotic translation initiation factor 5A-3 (EIF5A3).